Consider the following 396-residue polypeptide: Methylthioribose kinase (396 aa).

Residues N44, K61, and 115-117 (EDL) contribute to the ATP site. Residue D233 participates in substrate binding. Position 250–252 (250–252 (DPE)) interacts with ATP. R340 is a binding site for substrate.

Belongs to the methylthioribose kinase family. In terms of assembly, homodimer.

The catalysed reaction is 5-(methylsulfanyl)-D-ribose + ATP = 5-(methylsulfanyl)-alpha-D-ribose 1-phosphate + ADP + H(+). The protein operates within amino-acid biosynthesis; L-methionine biosynthesis via salvage pathway; S-methyl-5-thio-alpha-D-ribose 1-phosphate from S-methyl-5'-thioadenosine (hydrolase route): step 2/2. Functionally, catalyzes the phosphorylation of methylthioribose into methylthioribose-1-phosphate. The polypeptide is Methylthioribose kinase (Geobacillus kaustophilus (strain HTA426)).